The following is a 511-amino-acid chain: Transcription factor bHLH28 (511 aa).

The region spanning Asp-339–Leu-388 is the bHLH domain.

As to quaternary structure, homodimer.

It localises to the nucleus. The sequence is that of Transcription factor bHLH28 (BHLH28) from Arabidopsis thaliana (Mouse-ear cress).